A 2036-amino-acid polypeptide reads, in one-letter code: Proline-rich protein 12 (2036 aa).

Disordered regions lie at residues 210–283, 331–587, and 649–697; these read GGGV…RALP, CSPL…GAPG, and APSP…DPQR. Positions 223 to 240 are enriched in pro residues; that stretch reads QTPPYRPGPPDPPPPPRH. Residues 249–258 are compositionally biased toward low complexity; sequence ASSSAAAAAA. Phosphoserine is present on residues S332 and S340. Residues 340 to 365 show a composition bias toward low complexity; that stretch reads SPGAGEPSKAGPSGATAGASGRATGP. Gly residues-rich tracts occupy residues 367–380 and 391–400; these read AAGG…GGGY and TGKGGYGAAA. Low complexity-rich tracts occupy residues 411–432 and 441–458; these read STAT…TGKA and QAYS…QAYG. Residues 479–490 are compositionally biased toward pro residues; that stretch reads PPQPPSGPPPPG. Composition is skewed to polar residues over residues 493–504 and 523–537; these read TCQSYSPDQLQG and GLPT…STGH. Residues 543–558 show a composition bias toward gly residues; that stretch reads GHGGGWGPSSLGGGGE. S651 bears the Phosphoserine mark. Positions 673–683 are enriched in gly residues; that stretch reads GLGGSGGAGGP. At T738 the chain carries Phosphothreonine. Disordered stretches follow at residues 758–850, 859–878, 886–925, and 952–1068; these read AFLQ…PLQL, LEPA…DPPG, ALEP…KAPR, and EMFG…CSTK. The span at 802–817 shows a compositional bias: low complexity; sequence LPSVLSHAPSPSPSAS. Pro residues predominate over residues 833–847; that stretch reads PQPPPPPPPPPPPMP. The residue at position 865 (S865) is a Phosphoserine. Residues 1037 to 1052 are compositionally biased toward pro residues; the sequence is AAPPPPPPPPPPPAPA. 2 positions are modified to phosphoserine: S1077 and S1135. 4 disordered regions span residues 1120-1260, 1294-1347, 1376-1573, and 1668-1840; these read RLPD…SLTR, RHPP…GGAL, TLPS…GEGI, and HRPP…PGRL. The segment covering 1182–1194 has biased composition (low complexity); sequence PTTAGPASASTPT. Residues 1199–1208 show a composition bias toward basic residues; the sequence is KPRGRGRGRG. Residues 1209 to 1223 show a composition bias toward basic and acidic residues; sequence RKAEEAGGTRLEPLK. K1223 carries the post-translational modification N6-acetyllysine. Polar residues predominate over residues 1239–1257; the sequence is GTSSGDAISGTDHNSLDSS. T1304 is modified (phosphothreonine). Pro residues-rich tracts occupy residues 1306–1317 and 1324–1338; these read PLSPPKSVPPSV and PQPP…PPPS. Residue S1308 is modified to Phosphoserine. Residues S1381, S1382, and S1387 each carry the phosphoserine modification. Pro residues-rich tracts occupy residues 1420 to 1438 and 1458 to 1535; these read DGPP…PLPG and PPTP…APSP. Residues 1541–1553 are compositionally biased toward basic and acidic residues; that stretch reads PDTRPLHLAKKQE. At T1561 the chain carries Phosphothreonine. S1568 bears the Phosphoserine mark. A compositionally biased stretch (pro residues) spans 1691–1703; the sequence is APPPKAPAPPPKP. Basic and acidic residues-rich tracts occupy residues 1704–1715 and 1737–1769; these read ETPEKTTSEKPP and PVEK…RPER. Residue T1705 is modified to Phosphothreonine. A compositionally biased stretch (low complexity) spans 1817–1829; the sequence is GSSSDSESSPGAP. Residue S1925 is modified to Phosphoserine.

It localises to the nucleus. Its subcellular location is the postsynaptic density. The protein resides in the synapse. It is found in the synaptosome. The polypeptide is Proline-rich protein 12 (Homo sapiens (Human)).